A 647-amino-acid polypeptide reads, in one-letter code: Threonine--tRNA ligase (647 aa).

In terms of domain architecture, TGS spans 1-61 (MIKITFPDGA…EEDGSIEIVT (61 aa)). The interval 240 to 538 (DHRKLGKELD…LIETYKGAFP (299 aa)) is catalytic. Cys-334, His-385, and His-515 together coordinate Zn(2+).

Belongs to the class-II aminoacyl-tRNA synthetase family. As to quaternary structure, homodimer. It depends on Zn(2+) as a cofactor.

Its subcellular location is the cytoplasm. The enzyme catalyses tRNA(Thr) + L-threonine + ATP = L-threonyl-tRNA(Thr) + AMP + diphosphate + H(+). In terms of biological role, catalyzes the attachment of threonine to tRNA(Thr) in a two-step reaction: L-threonine is first activated by ATP to form Thr-AMP and then transferred to the acceptor end of tRNA(Thr). Also edits incorrectly charged L-seryl-tRNA(Thr). The polypeptide is Threonine--tRNA ligase (Streptococcus agalactiae serotype III (strain NEM316)).